Reading from the N-terminus, the 377-residue chain is DNA replication and repair protein RecF (377 aa).

30-37 serves as a coordination point for ATP; that stretch reads GPNGVGKT.

It belongs to the RecF family.

Its subcellular location is the cytoplasm. The RecF protein is involved in DNA metabolism; it is required for DNA replication and normal SOS inducibility. RecF binds preferentially to single-stranded, linear DNA. It also seems to bind ATP. The protein is DNA replication and repair protein RecF of Salinispora tropica (strain ATCC BAA-916 / DSM 44818 / JCM 13857 / NBRC 105044 / CNB-440).